Consider the following 292-residue polypeptide: Transcription factor HFR1 (292 aa).

The tract at residues 114-153 (KRRIQVLSSDDESEEFTREVPSVTRKGSKRRRRDEKMSNK) is disordered. Positions 134–147 (PSVTRKGSKRRRRD) are basic motif; degenerate. Residues 134-183 (PSVTRKGSKRRRRDEKMSNKMRKLQQLVPNCHKTDKVSVLDKTIEYMKNL) enclose the bHLH domain. Residues 139-153 (KGSKRRRRDEKMSNK) are compositionally biased toward basic residues. The Nuclear localization signal motif lies at 141–148 (SKRRRRDE). The segment at 148 to 183 (EKMSNKMRKLQQLVPNCHKTDKVSVLDKTIEYMKNL) is helix-loop-helix motif.

In terms of assembly, binds to FHY1 and FHL. Forms PHYA/FHY1/HFR1 complex. Homodimer and heterodimer with PIF3. Do not interact alone with either phytochrome A (phyA) or B (phyB), but REP1/PIF3 complex binds to phyA and phyB, preferentially to the Pfr forms. Forms non-functional heterodimer with PRE6, causing liberation of PIF4 from the transcriptionally inactive complex HFR1-PIF4. Repressed when bound to PRE1, PRE2 and PRE4. Mainly expressed in fruits and flowers and, to a lower extent, in leaves, stems, seedlings and roots.

It localises to the nucleus. In terms of biological role, atypical bHLH transcription factor that regulates photomorphogenesis through modulation of phytochrome (e.g. PHYA) and cryptochrome signalings. Suppresses the transcriptional regulation activity of PIF4 by forming non-DNA-binding heterodimer. The sequence is that of Transcription factor HFR1 from Arabidopsis thaliana (Mouse-ear cress).